The primary structure comprises 496 residues: Glutamyl-tRNA(Gln) amidotransferase subunit A (496 aa).

Residues K75 and S150 each act as charge relay system in the active site. S174 (acyl-ester intermediate) is an active-site residue.

It belongs to the amidase family. GatA subfamily. In terms of assembly, heterotrimer of A, B and C subunits.

The catalysed reaction is L-glutamyl-tRNA(Gln) + L-glutamine + ATP + H2O = L-glutaminyl-tRNA(Gln) + L-glutamate + ADP + phosphate + H(+). Functionally, allows the formation of correctly charged Gln-tRNA(Gln) through the transamidation of misacylated Glu-tRNA(Gln) in organisms which lack glutaminyl-tRNA synthetase. The reaction takes place in the presence of glutamine and ATP through an activated gamma-phospho-Glu-tRNA(Gln). The chain is Glutamyl-tRNA(Gln) amidotransferase subunit A from Burkholderia ambifaria (strain ATCC BAA-244 / DSM 16087 / CCUG 44356 / LMG 19182 / AMMD) (Burkholderia cepacia (strain AMMD)).